Reading from the N-terminus, the 823-residue chain is Bifunctional enzyme flvA (823 aa).

Positions 56 to 535 (TAKFEMALMP…QRLYDAKFYI (480 aa)) are pyridoxal 5'-phosphate-dependent lyase. Residue Lys-331 is modified to N6-(pyridoxal phosphate)lysine. Positions 573–823 (DFDALQQVSH…TLPMNVPLWL (251 aa)) are alpha-ketoglutarate-dependent oxygenase. His-703 and Asp-705 together coordinate Fe cation.

It in the N-terminal section; belongs to the trans-sulfuration enzymes family. The protein in the C-terminal section; belongs to the iron/ascorbate-dependent oxidoreductase family. Requires pyridoxal 5'-phosphate as cofactor. It depends on Fe(2+) as a cofactor.

It catalyses the reaction O-acetyl-L-homoserine + 3-methyl-2-oxobutanoate = (6S)-6-amino-3,3-dimethyl-2-oxoheptanedioate + acetate + H(+). It carries out the reaction (6S)-3,3-dimethylpiperidine-2,6-dicarboxylate + 2-oxoglutarate + AH2 + O2 + H(+) = (2S)-5,5-dimethylpiperidine-2-carboxylate + succinate + A + 2 CO2 + H2O. It participates in secondary metabolite biosynthesis; terpenoid biosynthesis. Its function is as follows. Bifunctional enzyme; part of the gene cluster that mediates the biosynthesis of flavunoidine, an alkaloidal terpenoid with a tetracyclic cage-like core connected to dimethylcadaverine via a C-N bond and acylated with 5,5-dimethyl-L-pipecolate. The tetracyclic core is synthesized by the terpene cyclase flvE and the cytochrome P450 monooxygenase flvD. The terpene cyclase flvE catalyzes the cyclization of farnesyl pyrophosphate (FPP) to form (1R,4R,5S)-(+)-acoradiene and the cytochrome P450 monooxygenase flvD is then responsible for oxidative conversion of (1R,4R,5S)-(+)-acoradiene into the tetracyclic cage present in the final product flavunoidine. In parallel, the N-methyltransferase flvH dimethylates L-lysine to give N,N-dimethyl-L-Lysin which is decarboxylated by flvG to afford dimethylcadaverine. The terpene cyclase-like protein flvF is the enzyme that attaches the dimethylcadaverine precusor at the C-7 of the tetracyclic cage to yield pre-flavunoidine. The cytochrome monooxygenase flvC hydroxylates the C-10 position of pre-flavunoidine whereas the NRPS flvI acylates the terpenoid core at the hydroxylated C-10 with dimethylpipecolate to yield final flavunoidine. The bifunctional enzyme flvA and the dehydrogenase flvB are responsible for the synthesis of the dimethylpipecolate precursor. The PLP-dependent lyase domain of flvA might use L-O-acetyl-homoserine and alpha-keto-isovalerate to form an intermediary ketone that can cyclize intramolecularly to yield an imine. The imine can be reduced by flvB to yield the 6-carboxylated pipecolate. The C-terminal alpha-KG-dependent oxygenase domain of flvA is then proposed to catalyze the decarboxylation to yield dimethylpipecolate. The protein is Bifunctional enzyme flvA of Aspergillus flavus (strain ATCC 200026 / FGSC A1120 / IAM 13836 / NRRL 3357 / JCM 12722 / SRRC 167).